We begin with the raw amino-acid sequence, 53 residues long: ENEDPFYYDYETVRNGGLIFAALAFIVGLVIILSKRFRCGAKKKHRQIPEDGL.

The helical transmembrane segment at glycine 16 to serine 34 threads the bilayer.

It belongs to the FXYD family. As to quaternary structure, regulatory subunit of the sodium/potassium-transporting ATPase which is composed of a catalytic alpha subunit, an auxiliary non-catalytic beta subunit and an additional regulatory subunit. In terms of processing, the N-terminus is blocked. As to expression, highest levels expressed in the kidney and spleen. Restricted to the basolateral membrane in renal epithelial cells and varies in its level of expression along the nephron.

The protein resides in the membrane. Its function is as follows. May be involved in forming the receptor site for cardiac glycoside binding or may modulate the transport function of the sodium ATPase. The polypeptide is Sodium/potassium-transporting ATPase subunit gamma (FXYD2) (Ovis aries (Sheep)).